The sequence spans 24 residues: Cryptonin (24 aa).

Its function is as follows. Antimicrobial peptide, active against the Gram-negative bacterium E.coli K12-594 (MIC=3.12 ug/ml), the Gram-positive bacteria B.subtilis KCTC 3086 (MIC=3.12 ug/ml), S.aureus KCTC 1928 (MIC=25 ug/ml) and M.luteus KCTC 3063 (MIC=1.56 ug/ml), the antibiotic resistant bacteria methicillin-resistant S.aureus (MRSA) (MIC=25 ug/ml) and vancomycin-resistant Enterococci (VRE) (MIC=25 ug/ml), and the fungi C.albicans KCTC 7965 (MIC=50 ug/ml) and C.tropicalis KCTC 1925 (MIC=3.12 ug/ml). Has very low hemolytic activity on rat erythrocytes. This is Cryptonin from Cryptotympana dubia (Korean horse cicada).